Consider the following 41-residue polypeptide: Photosystem I reaction center subunit IX (41 aa).

A helical membrane pass occupies residues 7–27 (YLSTAPVLTLVSLTAVAGLLI).

Belongs to the PsaJ family.

It localises to the plastid. The protein localises to the chloroplast thylakoid membrane. Functionally, may help in the organization of the PsaE and PsaF subunits. This Chlorella vulgaris (Green alga) protein is Photosystem I reaction center subunit IX.